Here is a 264-residue protein sequence, read N- to C-terminus: Indolethylamine N-methyltransferase (264 aa).

Lys14 is modified (N6-succinyllysine). S-adenosyl-L-methionine-binding positions include Tyr21, Tyr26, Gly64–Ser65, Tyr70, Asp86, and Asn91. Lys97 carries the N6-succinyllysine modification. S-adenosyl-L-methionine contacts are provided by residues Asp143–Val144 and Phe164.

The protein belongs to the class I-like SAM-binding methyltransferase superfamily. NNMT/PNMT/TEMT family. As to quaternary structure, monomer. In terms of tissue distribution, detected in lung and liver (at protein level).

It is found in the cytoplasm. The catalysed reaction is a tertiary amine + S-adenosyl-L-methionine = a methylated tertiary amine + S-adenosyl-L-homocysteine + H(+). The enzyme catalyses a secondary amine + S-adenosyl-L-methionine = a methylated secondary amine + S-adenosyl-L-homocysteine + H(+). It catalyses the reaction a primary amine + S-adenosyl-L-methionine = a methylated primary amine + S-adenosyl-L-homocysteine + H(+). It carries out the reaction dimethyl sulfide + S-adenosyl-L-methionine = trimethylsulfonium + S-adenosyl-L-homocysteine. With respect to regulation, inhibited by the S-adenosyl-L-methionine analog sinefungin and by the product S-adenosyl-L-homocysteine. Its function is as follows. Catalyzes the N-methylation of tryptamine and structurally related compounds. Functions as a thioether S-methyltransferase and is active with a variety of thioethers and the corresponding selenium and tellurium compounds, including 3-methylthiopropionaldehyde, dimethyl selenide, dimethyl telluride, 2-methylthioethylamine, 2-methylthioethanol, methyl-n-propyl sulfide and diethyl sulfide. Plays an important role in the detoxification of selenium compounds. In Mus musculus (Mouse), this protein is Indolethylamine N-methyltransferase (Inmt).